The primary structure comprises 67 residues: ATP synthase F(0) complex subunit 8 (67 aa).

Residues 8–24 (TWFITITSMIMTLFILF) form a helical membrane-spanning segment. Position 54 is an N6-acetyllysine; alternate (Lys-54). The residue at position 54 (Lys-54) is an N6-succinyllysine; alternate. Residue Lys-57 is modified to N6-acetyllysine.

It belongs to the ATPase protein 8 family. In terms of assembly, component of the ATP synthase complex composed at least of ATP5F1A/subunit alpha, ATP5F1B/subunit beta, ATP5MC1/subunit c (homooctomer), MT-ATP6/subunit a, MT-ATP8/subunit 8, ATP5ME/subunit e, ATP5MF/subunit f, ATP5MG/subunit g, ATP5MK/subunit k, ATP5MJ/subunit j, ATP5F1C/subunit gamma, ATP5F1D/subunit delta, ATP5F1E/subunit epsilon, ATP5PF/subunit F6, ATP5PB/subunit b, ATP5PD/subunit d, ATP5PO/subunit OSCP. ATP synthase complex consists of a soluble F(1) head domain (subunits alpha(3) and beta(3)) - the catalytic core - and a membrane F(0) domain - the membrane proton channel (subunits c, a, 8, e, f, g, k and j). These two domains are linked by a central stalk (subunits gamma, delta, and epsilon) rotating inside the F1 region and a stationary peripheral stalk (subunits F6, b, d, and OSCP). Interacts with PRICKLE3.

The protein resides in the mitochondrion membrane. Its function is as follows. Subunit 8, of the mitochondrial membrane ATP synthase complex (F(1)F(0) ATP synthase or Complex V) that produces ATP from ADP in the presence of a proton gradient across the membrane which is generated by electron transport complexes of the respiratory chain. ATP synthase complex consist of a soluble F(1) head domain - the catalytic core - and a membrane F(1) domain - the membrane proton channel. These two domains are linked by a central stalk rotating inside the F(1) region and a stationary peripheral stalk. During catalysis, ATP synthesis in the catalytic domain of F(1) is coupled via a rotary mechanism of the central stalk subunits to proton translocation. In vivo, can only synthesize ATP although its ATP hydrolase activity can be activated artificially in vitro. Part of the complex F(0) domain. This chain is ATP synthase F(0) complex subunit 8, found in Sus scrofa (Pig).